The primary structure comprises 312 residues: Pantothenate kinase (312 aa).

97–104 (GSVAVGKS) is a binding site for ATP.

This sequence belongs to the prokaryotic pantothenate kinase family.

Its subcellular location is the cytoplasm. It catalyses the reaction (R)-pantothenate + ATP = (R)-4'-phosphopantothenate + ADP + H(+). Its pathway is cofactor biosynthesis; coenzyme A biosynthesis; CoA from (R)-pantothenate: step 1/5. The protein is Pantothenate kinase of Mycolicibacterium smegmatis (strain ATCC 700084 / mc(2)155) (Mycobacterium smegmatis).